A 1216-amino-acid polypeptide reads, in one-letter code: Histone-lysine N-methyltransferase SETDB1-B (1216 aa).

The stretch at 38 to 61 (KADLEQLQEWVEQREKEVADIDAL) forms a coiled coil. 2 Tudor domains span residues 266 to 329 (RLFV…LKKT) and 356 to 412 (LLKP…NLKM). Residues 417–513 (SQEKKMAGQQ…QGMPSDLQPK (97 aa)) form a disordered region. Residues 467–478 (PVAPQPAGPPQP) show a composition bias toward pro residues. Polar residues predominate over residues 482–498 (ESPSFKSQMAKKSTGQL). One can recognise an MBD domain in the interval 595-666 (HRGRNPLLTP…EMFCLDPYVL (72 aa)). Positions 728 to 801 (VGCDCTDGCR…MCTNRLVQHG (74 aa)) constitute a Pre-SET domain. Cys-730, Cys-732, Cys-736, Cys-742, Cys-744, Cys-782, Cys-786, Cys-788, and Cys-793 together coordinate Zn(2+). Positions 804–1179 (VRLQLFKTQN…AGTELTWDYN (376 aa)) constitute an SET domain. S-adenosyl-L-methionine contacts are provided by residues 814–816 (KGW), Asp-852, and Tyr-854. Disordered regions lie at residues 892 to 944 (LPAS…DTFV), 961 to 1057 (RRQA…KTQA), and 1081 to 1108 (KSGGGGAGGGGSGPSHGHGGGGGDNGPK). Positions 918–940 (DSSEESDDEKDDDSNEDDSDSSD) are enriched in acidic residues. Basic and acidic residues-rich tracts occupy residues 966 to 976 (GLKEESQDSKD) and 983 to 997 (GEDRKPPHMPEETGK). Positions 1003-1016 (WLTNQSSTSANQSV) are enriched in polar residues. 2 stretches are compositionally biased toward basic and acidic residues: residues 1020–1029 (GGIKTEKKDV) and 1046–1055 (DDNKEREKKT). A compositionally biased stretch (gly residues) spans 1082 to 1105 (SGGGGAGGGGSGPSHGHGGGGGDN). S-adenosyl-L-methionine contacts are provided by residues Arg-1133 and 1136-1137 (NH). Zn(2+) contacts are provided by Cys-1139, Cys-1192, Cys-1194, and Cys-1199. Residues 1188 to 1204 (KELLCCCGSTECRGRLL) form the Post-SET domain.

It belongs to the class V-like SAM-binding methyltransferase superfamily. Histone-lysine methyltransferase family. Suvar3-9 subfamily.

The protein resides in the nucleus. Its subcellular location is the chromosome. It carries out the reaction L-lysyl(4)-[histone H3] + 3 S-adenosyl-L-methionine = N(6),N(6),N(6)-trimethyl-L-lysyl(4)-[histone H3] + 3 S-adenosyl-L-homocysteine + 3 H(+). Its function is as follows. Histone methyltransferase that specifically trimethylates 'Lys-9' of histone H3. H3 'Lys-9' trimethylation represents a specific tag for epigenetic transcriptional repression by recruiting HP1 (CBX1, CBX3 and/or CBX5) proteins to methylated histones. Mainly functions in euchromatin regions, thereby playing a central role in the silencing of euchromatic genes. H3 'Lys-9' trimethylation is coordinated with DNA methylation. Plays a role in promoter hypermethylation and transcriptional silencing of tumor suppressor genes (TSGs) or other tumor-related genes. Also required to maintain a transcriptionally repressive state of genes in undifferentiated embryonic stem cells (ESCs). Associates at promoter regions of tumor suppressor genes (TSGs) leading to their gene silencing. The sequence is that of Histone-lysine N-methyltransferase SETDB1-B (setdb1b) from Danio rerio (Zebrafish).